Consider the following 395-residue polypeptide: S-adenosylmethionine synthase (395 aa).

H14 provides a ligand contact to ATP. D16 contacts Mg(2+). Residue E42 coordinates K(+). E55 and Q98 together coordinate L-methionine. Residues 98-108 are flexible loop; it reads QSPDIALGVDK. Residues 174 to 176, 240 to 241, D249, 255 to 256, A272, and K276 each bind ATP; these read DGK, RF, and RK. Position 249 (D249) interacts with L-methionine. Residue K280 participates in L-methionine binding.

This sequence belongs to the AdoMet synthase family. In terms of assembly, homotetramer; dimer of dimers. Mg(2+) is required as a cofactor. Requires K(+) as cofactor.

The protein localises to the cytoplasm. It carries out the reaction L-methionine + ATP + H2O = S-adenosyl-L-methionine + phosphate + diphosphate. It functions in the pathway amino-acid biosynthesis; S-adenosyl-L-methionine biosynthesis; S-adenosyl-L-methionine from L-methionine: step 1/1. In terms of biological role, catalyzes the formation of S-adenosylmethionine (AdoMet) from methionine and ATP. The overall synthetic reaction is composed of two sequential steps, AdoMet formation and the subsequent tripolyphosphate hydrolysis which occurs prior to release of AdoMet from the enzyme. The polypeptide is S-adenosylmethionine synthase (Thermotoga maritima (strain ATCC 43589 / DSM 3109 / JCM 10099 / NBRC 100826 / MSB8)).